We begin with the raw amino-acid sequence, 296 residues long: MDNSVRVRVPATSANLGPGYDCIGLALDLWDEVSVGVLDRPGVMIDVTGEGADTVPHDESHLVMATLRQGLVELGYPHPDAGLHLTAINSIPQSRGLGSSAAAVVSGLALAWGLARPGFPLDRSALLTMAAAIEGHPDNAAPAILGGAQLAWLDGEAVNHIGLTVNPSIVFRVYVPDRLVPTALARQVLPEQVDRVDAVHQVLAASLLVTALTTSPEHLLAATQDWIHQPYRRALMPESAALTDRLRGRGVATVISGAGPTVLALGSRDQLEKVSDVDTAGFVAHDLVLGEGVHFF.

Position 92–102 (92–102) interacts with ATP; that stretch reads PQSRGLGSSAA.

This sequence belongs to the GHMP kinase family. Homoserine kinase subfamily.

Its subcellular location is the cytoplasm. It carries out the reaction L-homoserine + ATP = O-phospho-L-homoserine + ADP + H(+). Its pathway is amino-acid biosynthesis; L-threonine biosynthesis; L-threonine from L-aspartate: step 4/5. In terms of biological role, catalyzes the ATP-dependent phosphorylation of L-homoserine to L-homoserine phosphate. This Cutibacterium acnes (strain DSM 16379 / KPA171202) (Propionibacterium acnes) protein is Homoserine kinase.